Consider the following 537-residue polypeptide: Organic anion transporter 3 (537 aa).

Over 1–11 (MTFSEILDRVG) the chain is Cytoplasmic. S4 is subject to Phosphoserine. The helical transmembrane segment at 12–32 (SMGPFQYLHVTLLALPILGIA) threads the bilayer. The Extracellular segment spans residues 33 to 123 (NHNLLQIFTA…LVCGSNKLKE (91 aa)). N-linked (GlcNAc...) asparagine glycosylation occurs at N81. A helical transmembrane segment spans residues 124 to 144 (MAQSVFMAGILVGGPVFGELS). The Cytoplasmic portion of the chain corresponds to 145 to 150 (DRFGRK). A helical transmembrane segment spans residues 151–171 (PILTWSYLLLAASGSSAAFSP). Topologically, residues 172 to 176 (SLTVY) are extracellular. A helical membrane pass occupies residues 177-197 (MIFRFLCGCSISGISLSTIIL). Residues 198-212 (NVEWVPTSTRAISST) are Cytoplasmic-facing. Residues 213 to 233 (TIGYCYTIGQFILPGLAYAVP) traverse the membrane as a helical segment. Residues 234–236 (QWR) lie on the Extracellular side of the membrane. A helical transmembrane segment spans residues 237-257 (WLQLSVSAAFFIFSLLSWWVP). Topologically, residues 258 to 327 (ESIRWLVLSG…FRVSILRRVT (70 aa)) are cytoplasmic. The chain crosses the membrane as a helical span at residues 328–348 (FCLSLAWFATGFAYYSLAMGV). The Extracellular portion of the chain corresponds to 349–354 (EEFGVN). The helical transmembrane segment at 355–375 (IYILQIIFGGVDIPAKFITIL) threads the bilayer. Over 376–383 (SISYLGRR) the chain is Cytoplasmic. A helical membrane pass occupies residues 384–404 (ITQGFLLILAGVAILALIFVS). At 405-411 (SEMQLLR) the chain is on the extracellular side. A helical transmembrane segment spans residues 412 to 432 (TALAVFGKGCLSGSFSCLFLY). At 433-471 (TSELYPTVLRQTGMGISNIWARVGSMIAPLVKITGELQP) the chain is on the cytoplasmic side. A helical transmembrane segment spans residues 472–492 (FIPNVIFGTMTLLGGSAAFFL). Residues 493 to 537 (LETLNRPLPETIEDIQDWYQQTKKTKQEPEAEKASQTIPLKTGGP) lie on the Extracellular side of the membrane. A disordered region spans residues 513–537 (QTKKTKQEPEAEKASQTIPLKTGGP).

Belongs to the major facilitator (TC 2.A.1) superfamily. Organic cation transporter (TC 2.A.1.19) family. In terms of tissue distribution, expressed mainly in kidney. In kidney, detected in almost all parts of the nephron, including macula densa cells. Expressed (at protein level) throughout the renal cortex. Widely distributed in the brain with no large regional differences. Expressed in the choroid plexus (CP, located in the ventricles of the brain). Expressed in developing bone. Weakly expressed in brain and eye.

It localises to the basolateral cell membrane. The catalysed reaction is estrone 3-sulfate(out) + glutarate(in) = estrone 3-sulfate(in) + glutarate(out). It carries out the reaction estrone 3-sulfate(in) + 2-oxoglutarate(out) = estrone 3-sulfate(out) + 2-oxoglutarate(in). It catalyses the reaction taurocholate(out) + glutarate(in) = taurocholate(in) + glutarate(out). The enzyme catalyses dehydroepiandrosterone 3-sulfate(out) + glutarate(in) = dehydroepiandrosterone 3-sulfate(in) + glutarate(out). The catalysed reaction is glutarate(in) + 2-oxoglutarate(out) = glutarate(out) + 2-oxoglutarate(in). It carries out the reaction urate(in) + 2-oxoglutarate(out) = urate(out) + 2-oxoglutarate(in). It catalyses the reaction prostaglandin F2alpha(out) + glutarate(in) = prostaglandin F2alpha(in) + glutarate(out). The enzyme catalyses prostaglandin F2alpha(out) + 2-oxoglutarate(in) = prostaglandin F2alpha(in) + 2-oxoglutarate(out). The catalysed reaction is (R)-carnitine(out) + 2-oxoglutarate(in) = (R)-carnitine(in) + 2-oxoglutarate(out). It carries out the reaction glutarate(in) + (R)-carnitine(out) = glutarate(out) + (R)-carnitine(in). It catalyses the reaction prostaglandin E2(out) + 2-oxoglutarate(in) = prostaglandin E2(in) + 2-oxoglutarate(out). The enzyme catalyses prostaglandin E2(out) + glutarate(in) = prostaglandin E2(in) + glutarate(out). The catalysed reaction is urate(in) + glutarate(out) = urate(out) + glutarate(in). It carries out the reaction taurocholate(out) + 2-oxoglutarate(in) = taurocholate(in) + 2-oxoglutarate(out). It catalyses the reaction dehydroepiandrosterone 3-sulfate(out) + 2-oxoglutarate(in) = dehydroepiandrosterone 3-sulfate(in) + 2-oxoglutarate(out). The enzyme catalyses kynurenate(out) + a dicarboxylate(in) = kynurenate(in) + a dicarboxylate(out). The catalysed reaction is (indol-3-yl)acetate(out) + a dicarboxylate(in) = (indol-3-yl)acetate(in) + a dicarboxylate(out). It carries out the reaction indoxyl sulfate(out) + a dicarboxylate(in) = indoxyl sulfate(in) + a dicarboxylate(out). It catalyses the reaction N-benzoylglycine(out) + a dicarboxylate(in) = N-benzoylglycine(in) + a dicarboxylate(out). The enzyme catalyses 3-carboxy-4-methyl-5-propyl-2-furanpropanoate(out) + a dicarboxylate(in) = 3-carboxy-4-methyl-5-propyl-2-furanpropanoate(in) + a dicarboxylate(out). The catalysed reaction is (6R)-L-erythro-5,6,7,8-tetrahydrobiopterin(out) + a dicarboxylate(in) = (6R)-L-erythro-5,6,7,8-tetrahydrobiopterin(in) + a dicarboxylate(out). It carries out the reaction L-erythro-7,8-dihydrobiopterin(out) + a dicarboxylate(in) = L-erythro-7,8-dihydrobiopterin(in) + a dicarboxylate(out). It catalyses the reaction L-sepiapterin(out) + a dicarboxylate(in) = L-sepiapterin(in) + a dicarboxylate(out). Expression inhibited by androgens such as testosterone. Functions as an organic anion/dicarboxylate exchanger that couples organic anion uptake indirectly to the sodium gradient. Transports organic anions such as estrone 3-sulfate (E1S) and urate in exchange for dicarboxylates such as glutarate or ketoglutarate (2-oxoglutarate). Plays an important role in the excretion of endogenous and exogenous organic anions, especially from the kidney and the brain. E1S transport is pH- and chloride-dependent and may also involve E1S/cGMP exchange. Responsible for the transport of prostaglandin E2 (PGE2) and prostaglandin F2(alpha) (PGF2(alpha)) in the basolateral side of the renal tubule. Involved in the transport of neuroactive tryptophan metabolites kynurenate and xanthurenate. Functions as a biopterin transporters involved in the uptake and the secretion of coenzymes tetrahydrobiopterin (BH4), dihydrobiopterin (BH2) and sepiapterin to urine, thereby determining baseline levels of blood biopterins. May be involved in the basolateral transport of steviol, a metabolite of the popular sugar substitute stevioside. May participate in the detoxification/ renal excretion of drugs and xenobiotics, such as the histamine H(2)-receptor antagonists fexofenadine and cimetidine, the antibiotic benzylpenicillin (PCG), the anionic herbicide 2,4-dichloro-phenoxyacetate (2,4-D), the diagnostic agent p-aminohippurate (PAH), the antiviral acyclovir (ACV), and the mycotoxin ochratoxin (OTA), by transporting these exogenous organic anions across the cell membrane in exchange for dicarboxylates such as 2-oxoglutarate. May contribute to the release of cortisol in the adrenals. Involved in one of the detoxification systems on the choroid plexus (CP), removes substrates such as E1S or taurocholate (TC), PCG, 2,4-D and PAH, from the cerebrospinal fluid (CSF) to the blood for eventual excretion in urine and bile. Also contributes to the uptake of several other organic compounds such as the prostanoids prostaglandin E(2) and prostaglandin F(2-alpha), L-carnitine, and the therapeutic drugs allopurinol, 6-mercaptopurine (6-MP) and 5-fluorouracil (5-FU). Mediates the transport of PAH, PCG, and the statins pravastatin and pitavastatin, from the cerebrum into the blood circulation across the blood-brain barrier (BBB). Contributes to the renal uptake of potent uremic toxins (indoxyl sulfate (IS), indole acetate (IA), hippurate/N-benzoylglycine (HA) and 3-carboxy-4-methyl-5-propyl-2-furanpropionate (CMPF)), pravastatin, PCG, E1S and dehydroepiandrosterone sulfate (DHEAS), and is partly involved in the renal uptake of temocaprilat (an angiotensin-converting enzyme (ACE) inhibitor). In summary, plays a role in the efflux of drugs and xenobiotics, helping reduce their undesired toxicological effects on the body. The polypeptide is Organic anion transporter 3 (Slc22a8) (Mus musculus (Mouse)).